A 30-amino-acid polypeptide reads, in one-letter code: Cycloviolacin-O20 (30 aa).

The segment at residues 1-30 (GIPCGESCVWIPCLTSAIGCSCKSKVCYRD) is a cross-link (cyclopeptide (Gly-Asp)). 3 cysteine pairs are disulfide-bonded: C4–C20, C8–C22, and C13–C27.

This is a cyclic peptide.

Functionally, probably participates in a plant defense mechanism. The polypeptide is Cycloviolacin-O20 (Viola odorata (Sweet violet)).